Reading from the N-terminus, the 146-residue chain is Hemoglobin subunit beta (146 aa).

V1 carries the N-acetylvaline modification. The region spanning 2 to 146 is the Globin domain; sequence HLSGEEKTAL…VANALAHKYH (145 aa). Phosphoserine is present on S44. Residue K59 is modified to N6-acetyllysine. H63 is a binding site for heme b. Residue K82 is modified to N6-acetyllysine. H92 contributes to the heme b binding site. Position 93 is an S-nitrosocysteine (C93). N6-acetyllysine is present on K144.

The protein belongs to the globin family. In terms of assembly, heterotetramer of two alpha chains and two beta chains. Red blood cells.

Involved in oxygen transport from the lung to the various peripheral tissues. This Tamiasciurus hudsonicus (American red squirrel) protein is Hemoglobin subunit beta.